Here is a 513-residue protein sequence, read N- to C-terminus: 2,3-bisphosphoglycerate-independent phosphoglycerate mutase (513 aa).

Mn(2+) contacts are provided by D13 and S63. Catalysis depends on S63, which acts as the Phosphoserine intermediate. Substrate contacts are provided by residues H124, 154-155 (RD), R186, R192, 262-265 (RADR), and K335. Mn(2+)-binding residues include D402, H406, D443, H444, and H462.

Belongs to the BPG-independent phosphoglycerate mutase family. As to quaternary structure, monomer. The cofactor is Mn(2+).

The enzyme catalyses (2R)-2-phosphoglycerate = (2R)-3-phosphoglycerate. It participates in carbohydrate degradation; glycolysis; pyruvate from D-glyceraldehyde 3-phosphate: step 3/5. In terms of biological role, catalyzes the interconversion of 2-phosphoglycerate and 3-phosphoglycerate. This Shewanella frigidimarina (strain NCIMB 400) protein is 2,3-bisphosphoglycerate-independent phosphoglycerate mutase.